Consider the following 267-residue polypeptide: Undecaprenyl-diphosphatase (267 aa).

7 helical membrane passes run 39–59, 87–107, 111–131, 149–169, 189–209, 218–238, and 244–264; these read QGLA…ILYF, WMIA…KDFI, LRSA…LWWV, ALFI…RSGA, FLMS…KLVT, ALSI…HAFL, and VGMM…IAFL.

The protein belongs to the UppP family.

Its subcellular location is the cell inner membrane. It carries out the reaction di-trans,octa-cis-undecaprenyl diphosphate + H2O = di-trans,octa-cis-undecaprenyl phosphate + phosphate + H(+). Functionally, catalyzes the dephosphorylation of undecaprenyl diphosphate (UPP). Confers resistance to bacitracin. This Photobacterium profundum (strain SS9) protein is Undecaprenyl-diphosphatase.